The chain runs to 300 residues: GTPase Era (300 aa).

Positions 8–176 (RCGYVAIVGR…ESLIASHLPE (169 aa)) constitute an Era-type G domain. The segment at 16-23 (GRPNVGKS) is G1. GTP is bound at residue 16 to 23 (GRPNVGKS). The tract at residues 42-46 (QTTRH) is G2. The G3 stretch occupies residues 63 to 66 (DTPG). GTP-binding positions include 63–67 (DTPGM) and 125–128 (NKTD). Residues 125–128 (NKTD) form a G4 region. The interval 155–157 (ISA) is G5. Residues 199 to 283 (VREKIMRQLG…MLNLWVKVKG (85 aa)) form the KH type-2 domain.

The protein belongs to the TRAFAC class TrmE-Era-EngA-EngB-Septin-like GTPase superfamily. Era GTPase family. As to quaternary structure, monomer.

It localises to the cytoplasm. Its subcellular location is the cell inner membrane. Its function is as follows. An essential GTPase that binds both GDP and GTP, with rapid nucleotide exchange. Plays a role in 16S rRNA processing and 30S ribosomal subunit biogenesis and possibly also in cell cycle regulation and energy metabolism. In Pseudomonas savastanoi pv. phaseolicola (strain 1448A / Race 6) (Pseudomonas syringae pv. phaseolicola (strain 1448A / Race 6)), this protein is GTPase Era.